We begin with the raw amino-acid sequence, 125 residues long: Protein sigma-1-small (125 aa).

It belongs to the orthoreovirus sigma-1s protein family.

This chain is Protein sigma-1-small (S1), found in Mammalia (T2J).